A 293-amino-acid chain; its full sequence is Fructose-bisphosphate aldolase class 1 (293 aa).

Glu-176 (proton acceptor) is an active-site residue. Lys-211 functions as the Schiff-base intermediate with dihydroxyacetone-P in the catalytic mechanism.

It belongs to the class I fructose-bisphosphate aldolase family.

It carries out the reaction beta-D-fructose 1,6-bisphosphate = D-glyceraldehyde 3-phosphate + dihydroxyacetone phosphate. Its pathway is carbohydrate degradation; glycolysis; D-glyceraldehyde 3-phosphate and glycerone phosphate from D-glucose: step 4/4. This Porphyromonas gingivalis (strain ATCC 33277 / DSM 20709 / CIP 103683 / JCM 12257 / NCTC 11834 / 2561) protein is Fructose-bisphosphate aldolase class 1.